The primary structure comprises 46 residues: Mu-segestritoxin-Sf1f (46 aa).

Disulfide bonds link Cys-3–Cys-19, Cys-10–Cys-22, Cys-18–Cys-42, and Cys-24–Cys-40. The interval 31 to 33 (RPW) is keys region for toxin activity.

The protein belongs to the neurotoxin 16 (SFI) family. In terms of tissue distribution, expressed by the venom gland.

The protein resides in the secreted. Insecticidal toxin. It inhibits insect voltage-gated sodium channels (Nav) by partially blocking the channel pore in DUM neurons from the American cockroach, not by acting as a gating modifier. The inhibition is only partially reversible after prolonged washout. In vivo, the toxin causes flaccid paralysis followed by death when injected into Heliothis virescens larvae. It also causes uncoordinated movements followed by full paralysis to sheep blowflies (Lucilia cuprina). When the toxin is fused to snowdrop lectin, it is orally active against larvae of the tomato moth (Laconobia oleracea), the rice brown planthopper (Nilaparvata lugens), and the peach-potato aphid (Myzus persicae). In Segestria florentina (Tube-web spider), this protein is Mu-segestritoxin-Sf1f.